Reading from the N-terminus, the 147-residue chain is UPF0178 protein VIBHAR_03247 (147 aa).

It belongs to the UPF0178 family.

This Vibrio campbellii (strain ATCC BAA-1116) protein is UPF0178 protein VIBHAR_03247.